We begin with the raw amino-acid sequence, 478 residues long: Argininosuccinate lyase (478 aa).

This sequence belongs to the lyase 1 family. Argininosuccinate lyase subfamily.

The protein resides in the cytoplasm. The catalysed reaction is 2-(N(omega)-L-arginino)succinate = fumarate + L-arginine. It participates in amino-acid biosynthesis; L-arginine biosynthesis; L-arginine from L-ornithine and carbamoyl phosphate: step 3/3. This chain is Argininosuccinate lyase, found in Rhodospirillum rubrum (strain ATCC 11170 / ATH 1.1.1 / DSM 467 / LMG 4362 / NCIMB 8255 / S1).